The primary structure comprises 510 residues: NAD(P)H-quinone oxidoreductase subunit 2 B, chloroplastic (510 aa).

Helical transmembrane passes span 24–44 (LLLF…GLIL), 59–79 (WFYF…LFRW), 99–119 (IFQF…VEYI), 124–144 (MAIT…MFLC), 149–169 (LITI…LSGY), 183–203 (YLLM…WLYG), 229–249 (ISIA…PAPF), 295–315 (WHLL…LLAI), 323–343 (MLAY…IVGD), 354–374 (YMLF…LFGL), 395–415 (ALSL…AGFF), and 418–438 (LYLF…IGLL).

Belongs to the complex I subunit 2 family. As to quaternary structure, NDH is composed of at least 16 different subunits, 5 of which are encoded in the nucleus.

It is found in the plastid. Its subcellular location is the chloroplast thylakoid membrane. It catalyses the reaction a plastoquinone + NADH + (n+1) H(+)(in) = a plastoquinol + NAD(+) + n H(+)(out). The enzyme catalyses a plastoquinone + NADPH + (n+1) H(+)(in) = a plastoquinol + NADP(+) + n H(+)(out). In terms of biological role, NDH shuttles electrons from NAD(P)H:plastoquinone, via FMN and iron-sulfur (Fe-S) centers, to quinones in the photosynthetic chain and possibly in a chloroplast respiratory chain. The immediate electron acceptor for the enzyme in this species is believed to be plastoquinone. Couples the redox reaction to proton translocation, and thus conserves the redox energy in a proton gradient. This chain is NAD(P)H-quinone oxidoreductase subunit 2 B, chloroplastic, found in Agrostis stolonifera (Creeping bentgrass).